A 574-amino-acid chain; its full sequence is Sorting nexin-33 (574 aa).

The region spanning 1–61 (MALKGRALYD…PASYVEIVRP (61 aa)) is the SH3 domain. S77 carries the phosphoserine modification. The segment covering 79–90 (GTQGSLYSSPSM) has biased composition (polar residues). Residues 79–116 (GTQGSLYSSPSMASPARSGGGSGFLSNPGSFEDDDDDD) are disordered. S92 carries the phosphoserine modification. Positions 230–340 (FACSIEDPTK…HFLSCLDDKQ (111 aa)) constitute a PX domain. Residues 371–574 (LQDVEDRVDT…EKTLHMYDHL (204 aa)) form the BAR domain.

Belongs to the sorting nexin family. In terms of assembly, homodimer (via BAR domain). Interacts with ADAM15. Interacts with FASLG. Interacts (via SH3 domain) with DNM1 and DNM2. Interacts with WASL. Interacts with FCHSD1 (via the F-BAR domain). In terms of processing, phosphorylated. Detected in brain (at protein level).

The protein resides in the cytoplasm. It is found in the cytosol. Its subcellular location is the membrane. The protein localises to the cytoplasmic vesicle membrane. Plays a role in the reorganization of the cytoskeleton, endocytosis and cellular vesicle trafficking via its interactions with membranes, WASL, DNM1 and DNM2. Acts both during interphase and at the end of mitotic cell divisions. Required for efficient progress through mitosis and cytokinesis. Required for normal formation of the cleavage furrow at the end of mitosis. Modulates endocytosis of cell-surface proteins, such as APP and PRNP; this then modulates the secretion of APP and PRNP peptides. Promotes membrane tubulation (in vitro). May promote the formation of macropinosomes. The chain is Sorting nexin-33 (Snx33) from Mus musculus (Mouse).